Reading from the N-terminus, the 793-residue chain is Protein zer-1 homolog (793 aa).

LRR repeat units follow at residues 84–108 (RTSL…LMRH), 187–210 (LHDL…ALGS), and 269–294 (LRHL…ESTT).

Belongs to the zyg-11 family.

Its function is as follows. Serves as substrate adapter subunit in an E3 ubiquitin ligase complex CG12084-cul-2-elongin BC. Targets substrates bearing N-terminal glycine degrons for proteasomal degradation. This chain is Protein zer-1 homolog, found in Drosophila melanogaster (Fruit fly).